Consider the following 425-residue polypeptide: Probable threonylcarbamoyladenosine tRNA methylthiotransferase (425 aa).

Positions 2–110 (VKVYIENYGC…IVQAVEYAMR (109 aa)) constitute an MTTase N-terminal domain. [4Fe-4S] cluster-binding residues include cysteine 11, cysteine 47, cysteine 76, cysteine 148, cysteine 152, and cysteine 155. The 230-residue stretch at 134–363 (SPRNVYFILP…HRIRLQISYE (230 aa)) folds into the Radical SAM core domain. Residues 366–425 (RKYIGKKVKVLIHGEGKKGNVDAVTMNYKHIILPEGRKGEFREARVKNAASTYLLGEIIT) form the TRAM domain.

The protein belongs to the methylthiotransferase family. CDKAL1 subfamily. It depends on [4Fe-4S] cluster as a cofactor.

It catalyses the reaction N(6)-L-threonylcarbamoyladenosine(37) in tRNA + (sulfur carrier)-SH + AH2 + 2 S-adenosyl-L-methionine = 2-methylsulfanyl-N(6)-L-threonylcarbamoyladenosine(37) in tRNA + (sulfur carrier)-H + 5'-deoxyadenosine + L-methionine + A + S-adenosyl-L-homocysteine + 2 H(+). Functionally, catalyzes the methylthiolation of N6-threonylcarbamoyladenosine (t(6)A), leading to the formation of 2-methylthio-N6-threonylcarbamoyladenosine (ms(2)t(6)A) at position 37 in tRNAs that read codons beginning with adenine. The protein is Probable threonylcarbamoyladenosine tRNA methylthiotransferase of Pyrococcus horikoshii (strain ATCC 700860 / DSM 12428 / JCM 9974 / NBRC 100139 / OT-3).